The chain runs to 542 residues: MTTPRPVLLAIMDGWGLAPAGPGNGVSLANTPNVNHWMATCPTTQLHASGLDVGLPEGQIGNSEVGHLNIGAGLVVYQDSTRISESIKSGEFFENPAFLEAVQIVKERGTNMHLIGLIGRGGVHAYDIHLAGLLQLMAQQGVNHTYIHAFMDGRDTLPQSGLGYMRELQQTISQIGVGQVASVIGRYYAMDRDKRWERVGAAYAAMVEGVGHTASDPISAIEQAYLRDARGDEFIEATVITDSAGVALPRISTGDVVICFNFRADRVRQITRALMQSDLNTMIQEWYANQAEQGLQLPTTIWQRPEQVSNLHYVTMTQYDATFPYAIAYPPHYITEPLAKVIADAGKRQYHSAETEKYPHVTFFLNGRREEPFAGEDRVMAASPKVATYDLQPEMSAEEVAAKLLDAVNSQIYDFLVVNFANPDMVGHTGVIPAVVKACETVDRCLGQVVPAVVAQGGAAILIADHGNAEQMIDPQTGGPHTAHTTNLVPCILVADPATGLTREQISLRAGGRLADLAPTILDLLGLQKAAAMTGTSLIETK.

2 residues coordinate Mn(2+): Asp-13 and Ser-63. Ser-63 serves as the catalytic Phosphoserine intermediate. Substrate is bound by residues His-124, 154-155 (RD), Arg-186, Arg-192, 263-266 (RADR), and Lys-357. Mn(2+) is bound by residues Asp-424, His-428, Asp-465, His-466, and His-484.

Belongs to the BPG-independent phosphoglycerate mutase family. In terms of assembly, monomer. Mn(2+) serves as cofactor.

The catalysed reaction is (2R)-2-phosphoglycerate = (2R)-3-phosphoglycerate. The protein operates within carbohydrate degradation; glycolysis; pyruvate from D-glyceraldehyde 3-phosphate: step 3/5. Catalyzes the interconversion of 2-phosphoglycerate and 3-phosphoglycerate. This Herpetosiphon aurantiacus (strain ATCC 23779 / DSM 785 / 114-95) protein is 2,3-bisphosphoglycerate-independent phosphoglycerate mutase.